The primary structure comprises 589 residues: V-type ATP synthase alpha chain 1 (589 aa).

Gly239–Thr246 contacts ATP.

This sequence belongs to the ATPase alpha/beta chains family.

It carries out the reaction ATP + H2O + 4 H(+)(in) = ADP + phosphate + 5 H(+)(out). Functionally, produces ATP from ADP in the presence of a proton gradient across the membrane. The V-type alpha chain is a catalytic subunit. The sequence is that of V-type ATP synthase alpha chain 1 (atpA1) from Treponema pallidum (strain Nichols).